Here is a 218-residue protein sequence, read N- to C-terminus: Probable nicotinate-nucleotide adenylyltransferase (218 aa).

It belongs to the NadD family.

The catalysed reaction is nicotinate beta-D-ribonucleotide + ATP + H(+) = deamido-NAD(+) + diphosphate. The protein operates within cofactor biosynthesis; NAD(+) biosynthesis; deamido-NAD(+) from nicotinate D-ribonucleotide: step 1/1. In terms of biological role, catalyzes the reversible adenylation of nicotinate mononucleotide (NaMN) to nicotinic acid adenine dinucleotide (NaAD). This Sodalis glossinidius (strain morsitans) protein is Probable nicotinate-nucleotide adenylyltransferase.